The following is a 320-amino-acid chain: ATP-dependent 6-phosphofructokinase (320 aa).

Residue Gly12 coordinates ATP. Residues 22–26 (RGVVR) and 55–60 (RYSVSD) each bind ADP. ATP is bound by residues 73–74 (RF) and 103–106 (GDGS). Asp104 contacts Mg(2+). 126 to 128 (TID) provides a ligand contact to substrate. Catalysis depends on Asp128, which acts as the Proton acceptor. Residue Arg155 participates in ADP binding. Substrate is bound by residues Arg163 and 170-172 (MGR). Residues 186–188 (GCE), Lys212, and 214–216 (KKH) contribute to the ADP site. Residues Glu223, Arg244, and 250-253 (HIQR) contribute to the substrate site.

It belongs to the phosphofructokinase type A (PFKA) family. ATP-dependent PFK group I subfamily. Prokaryotic clade 'B1' sub-subfamily. In terms of assembly, homotetramer. Requires Mg(2+) as cofactor.

The protein localises to the cytoplasm. The catalysed reaction is beta-D-fructose 6-phosphate + ATP = beta-D-fructose 1,6-bisphosphate + ADP + H(+). Its pathway is carbohydrate degradation; glycolysis; D-glyceraldehyde 3-phosphate and glycerone phosphate from D-glucose: step 3/4. With respect to regulation, allosterically activated by ADP and other diphosphonucleosides, and allosterically inhibited by phosphoenolpyruvate. Functionally, catalyzes the phosphorylation of D-fructose 6-phosphate to fructose 1,6-bisphosphate by ATP, the first committing step of glycolysis. The protein is ATP-dependent 6-phosphofructokinase of Sodalis glossinidius (strain morsitans).